We begin with the raw amino-acid sequence, 280 residues long: Phosphatidylserine decarboxylase proenzyme (280 aa).

Catalysis depends on charge relay system; for autoendoproteolytic cleavage activity residues D90, H146, and S247. The active-site Schiff-base intermediate with substrate; via pyruvic acid; for decarboxylase activity is S247. S247 bears the Pyruvic acid (Ser); by autocatalysis mark.

It belongs to the phosphatidylserine decarboxylase family. PSD-B subfamily. Prokaryotic type I sub-subfamily. In terms of assembly, heterodimer of a large membrane-associated beta subunit and a small pyruvoyl-containing alpha subunit. Pyruvate serves as cofactor. Is synthesized initially as an inactive proenzyme. Formation of the active enzyme involves a self-maturation process in which the active site pyruvoyl group is generated from an internal serine residue via an autocatalytic post-translational modification. Two non-identical subunits are generated from the proenzyme in this reaction, and the pyruvate is formed at the N-terminus of the alpha chain, which is derived from the carboxyl end of the proenzyme. The autoendoproteolytic cleavage occurs by a canonical serine protease mechanism, in which the side chain hydroxyl group of the serine supplies its oxygen atom to form the C-terminus of the beta chain, while the remainder of the serine residue undergoes an oxidative deamination to produce ammonia and the pyruvoyl prosthetic group on the alpha chain. During this reaction, the Ser that is part of the protease active site of the proenzyme becomes the pyruvoyl prosthetic group, which constitutes an essential element of the active site of the mature decarboxylase.

The protein localises to the cell membrane. The catalysed reaction is a 1,2-diacyl-sn-glycero-3-phospho-L-serine + H(+) = a 1,2-diacyl-sn-glycero-3-phosphoethanolamine + CO2. It participates in phospholipid metabolism; phosphatidylethanolamine biosynthesis; phosphatidylethanolamine from CDP-diacylglycerol: step 2/2. Catalyzes the formation of phosphatidylethanolamine (PtdEtn) from phosphatidylserine (PtdSer). This chain is Phosphatidylserine decarboxylase proenzyme, found in Myxococcus xanthus (strain DK1622).